The primary structure comprises 417 residues: Type II methyltransferase M.KpnI (417 aa).

The protein belongs to the N(4)/N(6)-methyltransferase family.

It carries out the reaction a 2'-deoxyadenosine in DNA + S-adenosyl-L-methionine = an N(6)-methyl-2'-deoxyadenosine in DNA + S-adenosyl-L-homocysteine + H(+). In terms of biological role, a beta subtype methylase, recognizes the double-stranded sequence 5'-GGTACC-3', methylates A-4 on both strands, and protects the DNA from cleavage by the KpnI endonuclease. The polypeptide is Type II methyltransferase M.KpnI (Klebsiella pneumoniae).